The following is a 368-amino-acid chain: 3-dehydroquinate synthase (368 aa).

NAD(+) contacts are provided by residues Asp71–Lys76, Gly105–Asp109, Thr129–Thr130, Lys142, Lys151, and Thr169–Thr172. The Zn(2+) site is built by Glu184, His247, and His264.

It belongs to the sugar phosphate cyclases superfamily. Dehydroquinate synthase family. Co(2+) is required as a cofactor. It depends on Zn(2+) as a cofactor. Requires NAD(+) as cofactor.

It localises to the cytoplasm. It catalyses the reaction 7-phospho-2-dehydro-3-deoxy-D-arabino-heptonate = 3-dehydroquinate + phosphate. It functions in the pathway metabolic intermediate biosynthesis; chorismate biosynthesis; chorismate from D-erythrose 4-phosphate and phosphoenolpyruvate: step 2/7. Functionally, catalyzes the conversion of 3-deoxy-D-arabino-heptulosonate 7-phosphate (DAHP) to dehydroquinate (DHQ). In Ralstonia pickettii (strain 12J), this protein is 3-dehydroquinate synthase.